We begin with the raw amino-acid sequence, 1036 residues long: Exportin-T (1036 aa).

It belongs to the exportin family.

It localises to the nucleus. The protein localises to the cytoplasm. Its function is as follows. tRNA nucleus export receptor which facilitates tRNA translocation across the nuclear pore complex. Involved in pre-tRNA splicing, probably by affecting the interaction of pre-tRNA with splicing endonuclease. This Phaeosphaeria nodorum (strain SN15 / ATCC MYA-4574 / FGSC 10173) (Glume blotch fungus) protein is Exportin-T (LOS1).